The following is a 148-amino-acid chain: 3-dehydroquinate dehydratase (148 aa).

Residue tyrosine 22 is the Proton acceptor of the active site. Residues asparagine 73, histidine 79, and aspartate 86 each contribute to the substrate site. Residue histidine 99 is the Proton donor of the active site. Residues 100 to 101 and arginine 110 contribute to the substrate site; that span reads LS.

It belongs to the type-II 3-dehydroquinase family. As to quaternary structure, homododecamer.

The enzyme catalyses 3-dehydroquinate = 3-dehydroshikimate + H2O. It participates in metabolic intermediate biosynthesis; chorismate biosynthesis; chorismate from D-erythrose 4-phosphate and phosphoenolpyruvate: step 3/7. In terms of biological role, catalyzes a trans-dehydration via an enolate intermediate. The polypeptide is 3-dehydroquinate dehydratase (Jannaschia sp. (strain CCS1)).